Reading from the N-terminus, the 71-residue chain is Cruzioseptin-2 (71 aa).

The N-terminal stretch at 1–22 (MAFLKKSLFLVLFLGLVSLSIC) is a signal peptide. Residues 23–43 (EEEKREEENEEVQEDDDQSEE) constitute a propeptide that is removed on maturation. The residue at position 68 (glutamine 68) is a Glutamine amide. Positions 70 to 71 (EQ) are excised as a propeptide.

In terms of tissue distribution, expressed by the skin glands.

The protein localises to the secreted. In terms of biological role, has antimicrobial activity against Gram-negative bacterium E.coli (MIC=26.35 uM), against Gram-positive bacterium S.aureus (MIC=6.59 uM) and against fungus C.albicans (MIC=13.18 uM). At higher concentrations also has a bactericidal and fungicidal effect. Has hemagglutinating activity against horse erythrocytes. The chain is Cruzioseptin-2 from Cruziohyla calcarifer (Splendid leaf frog).